Here is a 109-residue protein sequence, read N- to C-terminus: Parvalbumin alpha (109 aa).

N-acetylserine is present on Ser1. 2 EF-hand domains span residues 38-73 (KSDAELAEIFNVLDGDQSGYIEVEELKNFLKCFSDG) and 77-109 (LNDKETSNFLAAGDSDGDHKIGVDEFKSMAKMT). Ca(2+)-binding residues include Asp51, Asp53, Ser55, Tyr57, Glu59, Glu62, Asp90, Asp92, Asp94, Lys96, and Glu101.

The protein belongs to the parvalbumin family. In terms of assembly, monomer.

Its function is as follows. In muscle, parvalbumin is thought to be involved in relaxation after contraction. It binds two calcium ions. This chain is Parvalbumin alpha, found in Raja clavata (Thornback ray).